Reading from the N-terminus, the 426-residue chain is Serine--tRNA ligase (426 aa).

233–235 (TSE) provides a ligand contact to L-serine. Residue 264 to 266 (RSE) coordinates ATP. Glu287 lines the L-serine pocket. 351–354 (EISS) is an ATP binding site. Ser387 is an L-serine binding site.

It belongs to the class-II aminoacyl-tRNA synthetase family. Type-1 seryl-tRNA synthetase subfamily. As to quaternary structure, homodimer. The tRNA molecule binds across the dimer.

The protein resides in the cytoplasm. The catalysed reaction is tRNA(Ser) + L-serine + ATP = L-seryl-tRNA(Ser) + AMP + diphosphate + H(+). It catalyses the reaction tRNA(Sec) + L-serine + ATP = L-seryl-tRNA(Sec) + AMP + diphosphate + H(+). It functions in the pathway aminoacyl-tRNA biosynthesis; selenocysteinyl-tRNA(Sec) biosynthesis; L-seryl-tRNA(Sec) from L-serine and tRNA(Sec): step 1/1. Catalyzes the attachment of serine to tRNA(Ser). Is also able to aminoacylate tRNA(Sec) with serine, to form the misacylated tRNA L-seryl-tRNA(Sec), which will be further converted into selenocysteinyl-tRNA(Sec). The polypeptide is Serine--tRNA ligase (Xylella fastidiosa (strain M12)).